The chain runs to 124 residues: Heat-labile enterotoxin B chain (124 aa).

The N-terminal stretch at 1–21 (MNKVKFYVLFTALLSSLCAHG) is a signal peptide. Cysteines 30 and 107 form a disulfide.

Heterohexamer of one A chain and of five B chains.

The biological activity of the toxin is produced by the A chain, which activates intracellular adenyl cyclase. The sequence is that of Heat-labile enterotoxin B chain (eltB) from Escherichia coli.